Reading from the N-terminus, the 472-residue chain is MTLDIPFDNTYAQLAPEFYTRQAPTPVKAPRLLAFNDALATLLGIARGTDAELAQVFGGNELPEGADPLAQLYAGHQFGTYNPQLGDGRAVLLGEVVGTDGLRRDIQLKGSGPTPYSRRGDGRAWLGPVLREYVVSEAMHALGIPTTRALAAVETGETVWREGGLPGAVLTRVASSHLRVGTFQIFAARGNTEALRSLTEYAIARHYPEAKGALGLLRAVRDAQVELVSAWMSVGFIHGVMNTDNSSIAGETIDYGPCAFMDVYHPNRVFSSIDRTGRYAYGNQPQIAVWNLAQLATALIQLEDDPESVLEEATEIVHAMPELLEDAWLRRFRAKIGLREVAEGDLELVSDLLGIMAQGQADFTNTFRGLLDGTARDQFLEPEAFDVWESRWKDRLSREADPEALMARSNPVLIPRNHRIEQMIAAAVGGDYASFERLMDALSHPFEAREDYADLRRPPAEDEVVQATFCGT.

ATP is bound by residues glycine 86, glycine 88, arginine 89, lysine 109, aspartate 121, glycine 122, arginine 172, and arginine 179. Aspartate 244 serves as the catalytic Proton acceptor. Mg(2+) contacts are provided by asparagine 245 and aspartate 254. An ATP-binding site is contributed by aspartate 254.

This sequence belongs to the SELO family. Mg(2+) is required as a cofactor. Mn(2+) serves as cofactor.

It carries out the reaction L-seryl-[protein] + ATP = 3-O-(5'-adenylyl)-L-seryl-[protein] + diphosphate. It catalyses the reaction L-threonyl-[protein] + ATP = 3-O-(5'-adenylyl)-L-threonyl-[protein] + diphosphate. The catalysed reaction is L-tyrosyl-[protein] + ATP = O-(5'-adenylyl)-L-tyrosyl-[protein] + diphosphate. The enzyme catalyses L-histidyl-[protein] + UTP = N(tele)-(5'-uridylyl)-L-histidyl-[protein] + diphosphate. It carries out the reaction L-seryl-[protein] + UTP = O-(5'-uridylyl)-L-seryl-[protein] + diphosphate. It catalyses the reaction L-tyrosyl-[protein] + UTP = O-(5'-uridylyl)-L-tyrosyl-[protein] + diphosphate. Its function is as follows. Nucleotidyltransferase involved in the post-translational modification of proteins. It can catalyze the addition of adenosine monophosphate (AMP) or uridine monophosphate (UMP) to a protein, resulting in modifications known as AMPylation and UMPylation. This Ruegeria sp. (strain TM1040) (Silicibacter sp.) protein is Protein nucleotidyltransferase YdiU.